A 328-amino-acid chain; its full sequence is 5,10-methylenetetrahydromethanopterin reductase (328 aa).

Belongs to the mer family.

The protein resides in the cytoplasm. It catalyses the reaction 5-methyl-5,6,7,8-tetrahydromethanopterin + oxidized coenzyme F420-(gamma-L-Glu)(n) + H(+) = 5,10-methylenetetrahydromethanopterin + reduced coenzyme F420-(gamma-L-Glu)(n). It participates in one-carbon metabolism; methanogenesis from CO(2); methyl-coenzyme M from 5,10-methylene-5,6,7,8-tetrahydromethanopterin: step 1/2. In terms of biological role, catalyzes the reversible reduction of methylene-H(4)MPT to methyl-H(4)MPT. The chain is 5,10-methylenetetrahydromethanopterin reductase from Methanosarcina acetivorans (strain ATCC 35395 / DSM 2834 / JCM 12185 / C2A).